A 110-amino-acid polypeptide reads, in one-letter code: UPF0122 protein BCAH187_A3894 (110 aa).

This sequence belongs to the UPF0122 family.

Its function is as follows. Might take part in the signal recognition particle (SRP) pathway. This is inferred from the conservation of its genetic proximity to ftsY/ffh. May be a regulatory protein. This Bacillus cereus (strain AH187) protein is UPF0122 protein BCAH187_A3894.